Consider the following 392-residue polypeptide: Phosphoglycerate kinase (392 aa).

Substrate contacts are provided by residues 21–23 (DLN), Arg36, 59–62 (HLGR), Arg114, and Arg147. ATP is bound by residues Lys198, Glu320, and 346 to 349 (GGDT).

It belongs to the phosphoglycerate kinase family. In terms of assembly, monomer.

The protein resides in the cytoplasm. It catalyses the reaction (2R)-3-phosphoglycerate + ATP = (2R)-3-phospho-glyceroyl phosphate + ADP. The protein operates within carbohydrate degradation; glycolysis; pyruvate from D-glyceraldehyde 3-phosphate: step 2/5. This chain is Phosphoglycerate kinase, found in Nitrosomonas eutropha (strain DSM 101675 / C91 / Nm57).